The following is a 618-amino-acid chain: Glucose starvation modulator protein 1 (618 aa).

Positions 20 to 48 (CEFCHTKHIQCDVGRPCQNCLKRNIGKFC) form a DNA-binding region, zn(2)-C6 fungal-type. Residues 325-352 (ANANTHPSHNAKLESECDSSSHSDADLE) form a disordered region. Positions 335 to 352 (AKLESECDSSSHSDADLE) are enriched in basic and acidic residues. Residues 466–538 (LLDLENMAKL…QIFNELLAFG (73 aa)) form the PAS domain.

Belongs to the ERT1/acuK family.

Its subcellular location is the nucleus. In terms of biological role, transcription factor which regulates nonfermentable carbon utilization. Binds specifically to 5'-CGGN(8)CGG-3' and 5'-CGGN(9)CGG-3' sequences in the promoter region. The sequence is that of Glucose starvation modulator protein 1 (GSM1) from Saccharomyces cerevisiae (strain YJM789) (Baker's yeast).